The primary structure comprises 128 residues: Small ribosomal subunit protein eS8 (128 aa).

Belongs to the eukaryotic ribosomal protein eS8 family. Part of the 30S ribosomal subunit.

This chain is Small ribosomal subunit protein eS8, found in Methanococcus aeolicus (strain ATCC BAA-1280 / DSM 17508 / OCM 812 / Nankai-3).